Consider the following 463-residue polypeptide: Argininosuccinate lyase (463 aa).

The protein belongs to the lyase 1 family. Argininosuccinate lyase subfamily.

Its subcellular location is the cytoplasm. The catalysed reaction is 2-(N(omega)-L-arginino)succinate = fumarate + L-arginine. The protein operates within amino-acid biosynthesis; L-arginine biosynthesis; L-arginine from L-ornithine and carbamoyl phosphate: step 3/3. The polypeptide is Argininosuccinate lyase (Bradyrhizobium sp. (strain ORS 278)).